A 529-amino-acid chain; its full sequence is Glucose transporter 2A (529 aa).

A disordered region spans residues 1 to 22 (MTERRDNVSHAPDAIEGPNDGA). Residues 1–43 (MTERRDNVSHAPDAIEGPNDGAHAEDTSPGFFSFENLGVAQVQ) lie on the Cytoplasmic side of the membrane. Residues 44 to 64 (VVGGTLNGFSIGFVAVYILLY) traverse the membrane as a helical segment. The Extracellular segment spans residues 65-119 (EVATNCSLFKTTEACKAVGSYGCEWKDTEVCSWKKECDSDSDGVNPCESLIGYSS). A helical membrane pass occupies residues 120-140 (LYSGIFASAMIVGSMVGSIIA). Topologically, residues 141 to 152 (GKCITMFGLKKS) are cytoplasmic. Residues 153–173 (FIIVGVMSVVASALNHISVAT) traverse the membrane as a helical segment. Residues 174–175 (NE) are Extracellular-facing. The helical transmembrane segment at 176-196 (FWVLCAGRVLMGIGLGVVCVI) threads the bilayer. At 197–214 (CPMYVNENAHPKLSKVDG) the chain is on the cytoplasmic side. A helical membrane pass occupies residues 215–235 (VLFQVFITFGIMLAAMLGLIL). The Extracellular portion of the chain corresponds to 236–250 (DKTVNYDNDPDMAGR). The helical transmembrane segment at 251 to 271 (FHGFCAVSSVLSVAMFLVGMF) threads the bilayer. The Cytoplasmic portion of the chain corresponds to 272-300 (LRESTATFSQDDDGKADGGMDPNEYGWGQ). The chain crosses the membrane as a helical span at residues 301–321 (MLWPLFMGAVTAGTLQLTGIN). The Extracellular portion of the chain corresponds to 322–339 (AVMNYAPKITENLGMDPS). The chain crosses the membrane as a helical span at residues 340-360 (LGNFLVMAWNFVTSLVAIPLA). Topologically, residues 361-368 (SRFTMRQM) are cytoplasmic. Residues 369-389 (FITCSFVASCMCLFLCGIPVF) traverse the membrane as a helical segment. Topologically, residues 390–404 (PGVAEEKVKNGVATT) are extracellular. Residues 405–425 (GIALFIAAFEFGVGSCFFVLA) form a helical membrane-spanning segment. At 426–439 (QDLFPPSFRPKGSS) the chain is on the cytoplasmic side. A helical transmembrane segment spans residues 440–460 (FVVMMQFIFNILINLLYPITT). Topologically, residues 461 to 476 (EAISGGATGDQDKGQA) are extracellular. Residues 477–497 (VVFILFGLIGLICFVLQFFYL) form a helical membrane-spanning segment. Residues 498-529 (YPYDANQDHENDHGTEPVERILSPVDVPTPRN) are Cytoplasmic-facing. Residues 508–529 (NDHGTEPVERILSPVDVPTPRN) form a disordered region.

The protein belongs to the major facilitator superfamily. Sugar transporter (TC 2.A.1.1) family.

It localises to the membrane. Facilitative glucose transporter. In Trypanosoma brucei brucei, this protein is Glucose transporter 2A (THT2A).